Here is a 380-residue protein sequence, read N- to C-terminus: 1-deoxy-D-xylulose 5-phosphate reductoisomerase 2 (380 aa).

NADPH-binding residues include S10, G11, S12, I13, G36, K37, N38, and N120. Position 121 (K121) interacts with 1-deoxy-D-xylulose 5-phosphate. An NADPH-binding site is contributed by E122. A Mn(2+)-binding site is contributed by D146. Positions 147, 148, 172, and 195 each coordinate 1-deoxy-D-xylulose 5-phosphate. Mn(2+) is bound at residue E148. G201 provides a ligand contact to NADPH. 1-deoxy-D-xylulose 5-phosphate is bound by residues S208, N213, K214, and E217. E217 lines the Mn(2+) pocket.

The protein belongs to the DXR family. Mg(2+) serves as cofactor. Mn(2+) is required as a cofactor.

The catalysed reaction is 2-C-methyl-D-erythritol 4-phosphate + NADP(+) = 1-deoxy-D-xylulose 5-phosphate + NADPH + H(+). It functions in the pathway isoprenoid biosynthesis; isopentenyl diphosphate biosynthesis via DXP pathway; isopentenyl diphosphate from 1-deoxy-D-xylulose 5-phosphate: step 1/6. Catalyzes the NADPH-dependent rearrangement and reduction of 1-deoxy-D-xylulose-5-phosphate (DXP) to 2-C-methyl-D-erythritol 4-phosphate (MEP). The protein is 1-deoxy-D-xylulose 5-phosphate reductoisomerase 2 of Bacillus anthracis.